The chain runs to 125 residues: Small ribosomal subunit protein uS12m (125 aa).

Positions Met-1–Cys-27 are disordered. The span at His-10–Ala-23 shows a compositional bias: basic and acidic residues.

This sequence belongs to the universal ribosomal protein uS12 family.

The protein resides in the mitochondrion. Protein S12 is involved in the translation initiation step. This chain is Small ribosomal subunit protein uS12m (RPS12), found in Triticum aestivum (Wheat).